Here is a 446-residue protein sequence, read N- to C-terminus: 4-aminobutyrate aminotransferase (446 aa).

The residue at position 291 (Lys-291) is an N6-(pyridoxal phosphate)lysine.

It belongs to the class-III pyridoxal-phosphate-dependent aminotransferase family. Pyridoxal 5'-phosphate serves as cofactor.

It carries out the reaction 4-aminobutanoate + 2-oxoglutarate = succinate semialdehyde + L-glutamate. It catalyses the reaction (S)-3-amino-2-methylpropanoate + 2-oxoglutarate = 2-methyl-3-oxopropanoate + L-glutamate. It functions in the pathway amino-acid degradation; 4-aminobutanoate degradation. This Mycobacterium leprae (strain TN) protein is 4-aminobutyrate aminotransferase (gabT).